The primary structure comprises 230 residues: Ribonuclease 3 (230 aa).

One can recognise an RNase III domain in the interval 10-133 (DPRLQSRIGY…IIGAIYVDSN (124 aa)). Glu-46 is a binding site for Mg(2+). Asp-50 is an active-site residue. Residues Asp-119 and Glu-122 each contribute to the Mg(2+) site. Glu-122 is an active-site residue. The DRBM domain occupies 161–230 (DPKSRLQEYL…AAEILKLLEQ (70 aa)).

It belongs to the ribonuclease III family. As to quaternary structure, homodimer. The cofactor is Mg(2+).

It localises to the cytoplasm. It catalyses the reaction Endonucleolytic cleavage to 5'-phosphomonoester.. Digests double-stranded RNA. Involved in the processing of primary rRNA transcript to yield the immediate precursors to the large and small rRNAs (23S and 16S). Processes some mRNAs, and tRNAs when they are encoded in the rRNA operon. Processes pre-crRNA and tracrRNA of type II CRISPR loci if present in the organism. In Acinetobacter baylyi (strain ATCC 33305 / BD413 / ADP1), this protein is Ribonuclease 3.